The following is a 256-amino-acid chain: Small ribosomal subunit protein eS1 (256 aa).

The span at 1–18 (MAVGKNKRLSKGKKGLKK) shows a compositional bias: basic residues. The tract at residues 1-22 (MAVGKNKRLSKGKKGLKKKTQD) is disordered. At alanine 2 the chain carries N-acetylalanine; partial.

The protein belongs to the eukaryotic ribosomal protein eS1 family. In terms of assembly, component of the small ribosomal subunit (SSU). Mature N.crassa ribosomes consist of a small (40S) and a large (60S) subunit. The 40S small subunit contains 1 molecule of ribosomal RNA (18S rRNA) and at least 32 different proteins. The large 60S subunit contains 3 rRNA molecules (26S, 5.8S and 5S rRNA) and at least 42 different proteins.

The protein localises to the cytoplasm. Functionally, component of the ribosome, a large ribonucleoprotein complex responsible for the synthesis of proteins in the cell. The small ribosomal subunit (SSU) binds messenger RNAs (mRNAs) and translates the encoded message by selecting cognate aminoacyl-transfer RNA (tRNA) molecules. The large subunit (LSU) contains the ribosomal catalytic site termed the peptidyl transferase center (PTC), which catalyzes the formation of peptide bonds, thereby polymerizing the amino acids delivered by tRNAs into a polypeptide chain. The nascent polypeptides leave the ribosome through a tunnel in the LSU and interact with protein factors that function in enzymatic processing, targeting, and the membrane insertion of nascent chains at the exit of the ribosomal tunnel. The chain is Small ribosomal subunit protein eS1 (rps1) from Neurospora crassa (strain ATCC 24698 / 74-OR23-1A / CBS 708.71 / DSM 1257 / FGSC 987).